We begin with the raw amino-acid sequence, 739 residues long: Phosphoribosylformylglycinamidine synthase subunit PurL (739 aa).

The active site involves His-54. ATP contacts are provided by Tyr-57 and Lys-96. Glu-98 is a binding site for Mg(2+). Residues 99 to 102 and Arg-121 contribute to the substrate site; that span reads SHNH. His-100 serves as the catalytic Proton acceptor. Asp-122 is a binding site for Mg(2+). Residue Gln-245 participates in substrate binding. Asp-273 is a Mg(2+) binding site. 317-319 lines the substrate pocket; the sequence is ESQ. Residues Asp-500 and Gly-537 each coordinate ATP. Asn-538 is a Mg(2+) binding site. Residue Ser-540 participates in substrate binding.

The protein belongs to the FGAMS family. In terms of assembly, monomer. Part of the FGAM synthase complex composed of 1 PurL, 1 PurQ and 2 PurS subunits.

Its subcellular location is the cytoplasm. It catalyses the reaction N(2)-formyl-N(1)-(5-phospho-beta-D-ribosyl)glycinamide + L-glutamine + ATP + H2O = 2-formamido-N(1)-(5-O-phospho-beta-D-ribosyl)acetamidine + L-glutamate + ADP + phosphate + H(+). The protein operates within purine metabolism; IMP biosynthesis via de novo pathway; 5-amino-1-(5-phospho-D-ribosyl)imidazole from N(2)-formyl-N(1)-(5-phospho-D-ribosyl)glycinamide: step 1/2. Functionally, part of the phosphoribosylformylglycinamidine synthase complex involved in the purines biosynthetic pathway. Catalyzes the ATP-dependent conversion of formylglycinamide ribonucleotide (FGAR) and glutamine to yield formylglycinamidine ribonucleotide (FGAM) and glutamate. The FGAM synthase complex is composed of three subunits. PurQ produces an ammonia molecule by converting glutamine to glutamate. PurL transfers the ammonia molecule to FGAR to form FGAM in an ATP-dependent manner. PurS interacts with PurQ and PurL and is thought to assist in the transfer of the ammonia molecule from PurQ to PurL. This Bacillus cereus (strain ZK / E33L) protein is Phosphoribosylformylglycinamidine synthase subunit PurL.